The following is a 334-amino-acid chain: S-adenosylmethionine decarboxylase proenzyme (334 aa).

Phe7 lines the substrate pocket. Catalysis depends on residues Glu8 and Glu11. Glu67 lines the substrate pocket. Ser68 acts as the Schiff-base intermediate with substrate; via pyruvic acid in catalysis. Ser68 is subject to Pyruvic acid (Ser); by autocatalysis. Cys82 acts as the Proton donor; for catalytic activity in catalysis. Phe223 is a binding site for substrate. Residues Ser229 and His243 each act as proton acceptor; for processing activity in the active site. Position 247 (Glu247) interacts with substrate. At Ser298 the chain carries Phosphoserine.

It belongs to the eukaryotic AdoMetDC family. In terms of assembly, heterotetramer of two alpha and two beta chains. It depends on pyruvate as a cofactor. In terms of processing, is synthesized initially as an inactive proenzyme. Formation of the active enzyme involves a self-maturation process in which the active site pyruvoyl group is generated from an internal serine residue via an autocatalytic post-translational modification. Two non-identical subunits are generated from the proenzyme in this reaction, and the pyruvate is formed at the N-terminus of the alpha chain, which is derived from the carboxyl end of the proenzyme. The post-translation cleavage follows an unusual pathway, termed non-hydrolytic serinolysis, in which the side chain hydroxyl group of the serine supplies its oxygen atom to form the C-terminus of the beta chain, while the remainder of the serine residue undergoes an oxidative deamination to produce ammonia and the pyruvoyl group blocking the N-terminus of the alpha chain.

The enzyme catalyses S-adenosyl-L-methionine + H(+) = S-adenosyl 3-(methylsulfanyl)propylamine + CO2. It participates in amine and polyamine biosynthesis; S-adenosylmethioninamine biosynthesis; S-adenosylmethioninamine from S-adenosyl-L-methionine: step 1/1. Essential for biosynthesis of the polyamines spermidine and spermine. Promotes maintenance and self-renewal of embryonic stem cells, by maintaining spermine levels. The chain is S-adenosylmethionine decarboxylase proenzyme (AMD1) from Bos taurus (Bovine).